Consider the following 1299-residue polypeptide: Protein prickle (1299 aa).

The span at 1-19 (MSSLSTGGGAGGSSGGPGG) shows a compositional bias: gly residues. Disordered regions lie at residues 1–24 (MSSL…DAAA), 115–181 (ADDG…EVTQ), 241–289 (EEES…PQVP), 368–396 (LPRH…PSSS), and 425–527 (LPPH…DDDS). Residues 145–159 (SPRRSKKLLRSLRAH) are compositionally biased toward basic residues. A compositionally biased stretch (polar residues) spans 168 to 181 (NDTTTANESSEVTQ). Over residues 263–272 (PVPPLPPPPA) the composition is skewed to pro residues. Over residues 425-434 (LPPHHQQHPG) the composition is skewed to low complexity. Gly residues predominate over residues 435–445 (AGMGPGPGSGA). The segment covering 457–469 (PGCSANPKYSNAQ) has biased composition (polar residues). A PET domain is found at 515–623 (MDMQRQSHSD…NVRQLMSARP (109 aa)). Over residues 516–525 (DMQRQSHSDD) the composition is skewed to basic and acidic residues. 3 consecutive LIM zinc-binding domains span residues 622-686 (RPCD…ETLK), 687-747 (PRCS…MFAE), and 748-810 (YCDY…GEPP). Disordered stretches follow at residues 807–865 (GEPP…HQAT), 902–940 (KDLE…GDFQ), and 1026–1249 (ADIL…SSSS). Low complexity predominate over residues 844–864 (PSSHASSSPPMSPQQQQQHQA). Polar residues-rich tracts occupy residues 922-934 (RASS…SPLN) and 1070-1081 (SLNTPMSTQSAS). Over residues 1089–1101 (SILSGASSSSPMS) the composition is skewed to low complexity. Residues 1136–1150 (GERERDRDKDKEGGG) are compositionally biased toward basic and acidic residues. The segment covering 1151-1183 (RHGHGHSSRRRRRRKSSSSSSHHRSGSGHRSHS) has biased composition (basic residues). The segment covering 1216 to 1231 (SPSRQQRERERERERE) has biased composition (basic and acidic residues). The segment covering 1238–1249 (VCSTCSSSSSSS) has biased composition (low complexity).

Belongs to the prickle / espinas / testin family. As to quaternary structure, interacts with dsh; PET and LIM domains interact with dsh DEP domain, in wing cells. Interacts with Vang in photoreceptor cells. As to expression, expressed in the wing, leg and eye imaginal disks. Expressed within the photoreceptors of the eye.

It is found in the cell membrane. Its function is as follows. Acts in a planar cell polarity (PCP) complex; polarization along the apical/basal axis of epithelial cells. Correct expression of the alternative isoforms is required for PCP signaling in imaginal disks. PCP signaling in the wing disk requires the receptor fz and the cytoplasmic proteins dsh and pk. These act in a feedback loop leading to activation of the jnk cascade and subsequent polarized arrangement of hairs and bristles. Dgo and pk compete with one another for dsh binding, thereby modulating fz dsh activity and ensuring tight control over fz PCP signaling. Vang, stan and pk function together to regulate the establishment of tissue polarity in the adult eye. The chain is Protein prickle from Drosophila melanogaster (Fruit fly).